The following is a 630-amino-acid chain: Mitochondrial Rho GTPase 1 (630 aa).

Positions 1 to 168 (MKEVRVVICG…FYMCRACVIY (168 aa)) constitute a Miro 1 domain. Residues 1–598 (MKEVRVVICG…EEDSNKTNYQ (598 aa)) lie on the Cytoplasmic side of the membrane. GTP is bound by residues 10–17 (GDQGVGKS), 57–61 (DTQSD), and 113–116 (NKSE). 2 EF-hand domains span residues 184-219 (ATIHALSRIFFLIDKNNDDLLSVDELNSLSEKCFSK) and 304-339 (KGYRFLVDLFYQFDRDNDGALNNEELSALFRHTPGL). Ca(2+) contacts are provided by Asp-197, Asn-199, Asp-201, Glu-208, Asp-317, Asp-319, Asp-321, and Glu-328. Residues 419-579 (RNVFLCFVVG…FIQLAESAQY (161 aa)) form the Miro 2 domain. GTP-binding positions include 428 to 435 (GSKSCGKT), 459 to 463 (EFQST), and 527 to 530 (TKAD). The chain crosses the membrane as a helical; Anchor for type IV membrane protein span at residues 599-619 (LVAALTAFGALLLSVGGSLTW). Residues 620–630 (KIIKHQYYSKK) are Mitochondrial intermembrane-facing.

The protein belongs to the mitochondrial Rho GTPase family.

Its subcellular location is the mitochondrion outer membrane. Mitochondrial GTPase involved in mitochondrial trafficking. Probably involved in control of anterograde transport of mitochondria and their subcellular distribution. This is Mitochondrial Rho GTPase 1 (gem1) from Schizosaccharomyces pombe (strain 972 / ATCC 24843) (Fission yeast).